The chain runs to 243 residues: UPF0246 protein Spy49_1742 (243 aa).

It belongs to the UPF0246 family.

This chain is UPF0246 protein Spy49_1742, found in Streptococcus pyogenes serotype M49 (strain NZ131).